The primary structure comprises 212 residues: KxDL motif-containing protein CG10681 (212 aa).

Residues 128-159 (RSSLAEEAEDDTEAQAKKTAETPAPAAAKPVL) form a disordered region. The segment covering 148–157 (ETPAPAAAKP) has biased composition (low complexity).

The protein belongs to the KXD1 family.

The polypeptide is KxDL motif-containing protein CG10681 (Drosophila melanogaster (Fruit fly)).